The primary structure comprises 430 residues: Histidine--tRNA ligase (430 aa).

It belongs to the class-II aminoacyl-tRNA synthetase family.

The protein localises to the cytoplasm. The catalysed reaction is tRNA(His) + L-histidine + ATP = L-histidyl-tRNA(His) + AMP + diphosphate + H(+). The chain is Histidine--tRNA ligase from Metallosphaera sedula (strain ATCC 51363 / DSM 5348 / JCM 9185 / NBRC 15509 / TH2).